The primary structure comprises 463 residues: Cysteine--tRNA ligase (463 aa).

Cys28 is a binding site for Zn(2+). A 'HIGH' region motif is present at residues 30–40 (VTIYDLCHIGH). Residues Cys209, His234, and Glu238 each contribute to the Zn(2+) site. The 'KMSKS' region motif lies at 266–270 (KMSKS). Residue Lys269 participates in ATP binding.

Belongs to the class-I aminoacyl-tRNA synthetase family. As to quaternary structure, monomer. Zn(2+) is required as a cofactor.

It localises to the cytoplasm. The catalysed reaction is tRNA(Cys) + L-cysteine + ATP = L-cysteinyl-tRNA(Cys) + AMP + diphosphate. The polypeptide is Cysteine--tRNA ligase (Tolumonas auensis (strain DSM 9187 / NBRC 110442 / TA 4)).